Consider the following 53-residue polypeptide: Large ribosomal subunit protein bL32c (53 aa).

Belongs to the bacterial ribosomal protein bL32 family.

It is found in the plastid. Its subcellular location is the chloroplast. The chain is Large ribosomal subunit protein bL32c from Coffea arabica (Arabian coffee).